The following is a 309-amino-acid chain: Porphobilinogen deaminase (309 aa).

C242 bears the S-(dipyrrolylmethanemethyl)cysteine mark.

It belongs to the HMBS family. As to quaternary structure, monomer. The cofactor is dipyrromethane.

It carries out the reaction 4 porphobilinogen + H2O = hydroxymethylbilane + 4 NH4(+). Its pathway is porphyrin-containing compound metabolism; protoporphyrin-IX biosynthesis; coproporphyrinogen-III from 5-aminolevulinate: step 2/4. Its function is as follows. Tetrapolymerization of the monopyrrole PBG into the hydroxymethylbilane pre-uroporphyrinogen in several discrete steps. This is Porphobilinogen deaminase from Shewanella woodyi (strain ATCC 51908 / MS32).